A 449-amino-acid polypeptide reads, in one-letter code: Dolichyl-diphosphooligosaccharide--protein glycosyltransferase 48 kDa subunit (449 aa).

The signal sequence occupies residues 1–18; that stretch reads MMWKALLIAVLAIAHCQA. Topologically, residues 19–412 are lumenal; the sequence is VLETDANTLV…ERFIPSAFPY (394 aa). A helical transmembrane segment spans residues 413–433; it reads YTSAFSMMIGVFVFSFVFLHF. Residues 434–449 are Cytoplasmic-facing; that stretch reads KDEPVGRAAKEDKKSQ.

It belongs to the DDOST 48 kDa subunit family. As to quaternary structure, component of the oligosaccharyltransferase (OST) complex.

The protein localises to the endoplasmic reticulum membrane. It functions in the pathway protein modification; protein glycosylation. Functionally, subunit of the oligosaccharyl transferase (OST) complex that catalyzes the initial transfer of a defined glycan (Glc(3)Man(9)GlcNAc(2) in eukaryotes) from the lipid carrier dolichol-pyrophosphate to an asparagine residue within an Asn-X-Ser/Thr consensus motif in nascent polypeptide chains, the first step in protein N-glycosylation. N-glycosylation occurs cotranslationally and the complex associates with the Sec61 complex at the channel-forming translocon complex that mediates protein translocation across the endoplasmic reticulum (ER). All subunits are required for a maximal enzyme activity. Required for the assembly of both SST3A- and SS3B-containing OST complexes. This chain is Dolichyl-diphosphooligosaccharide--protein glycosyltransferase 48 kDa subunit (Ost48), found in Drosophila melanogaster (Fruit fly).